Consider the following 584-residue polypeptide: MKNIKNMKNIKSEGFIFFVLVFFICIIFGCIYESLHEGPYKKTLNSLHESTKYRHFNKIRLLTEYKDTLQIKVEQKSLRDYVNNDRYNNVNTNDYTSYKDKGEQFNDTICVVDKKKENVTINNEEECNKNFYQYLQYLEHNNKQDNKYEETNYFLQGNDKHIDSEHNGINKMYKETIHKTLTSDVSTENSYTHNNSRDDEPQNGKRTYNNQSNNNLPYDNSSYNISPYHGPNNNVPYNKSNNFEQCNTQDNKHCNDLDTYHTCYGPDNYPQKYDNYRQECDNYRQECDNYRQEYDNYPQKYDNYRQECDNYRQEYDNYPHGFDNYPRGFDNYPHGYDNHPHRPHIYPHGFDNHPHRPHMYPHNFPMRNESVGGPYYRPPHIIERSNYYKNPKKAPHNMMLPCDTMKDNKSICDEQNFQRELEKIIKKNNLQNGNIRDNHDTRINDYNKRLTEYNKRLTEYNKRLTEYTKRLNEHYKRNGYNIQNRQNSIERAQSNDVVLYGHNFQNAFRYKQNTRSYYPHVNSNEATHHQKTMYFTQQNNYSREEYPIKSEQHLYHVKSKRLEKKLYDYQNGTNPVTNFLERHF.

The helical transmembrane segment at 15–35 (FIFFVLVFFICIIFGCIYESL) threads the bilayer. Composition is skewed to polar residues over residues 184–194 (DVSTENSYTHN) and 204–225 (GKRT…SYNI). Residues 184 to 226 (DVSTENSYTHNNSRDDEPQNGKRTYNNQSNNNLPYDNSSYNIS) are disordered. 2 coiled-coil regions span residues 267–319 (DNYP…DNYP) and 436–477 (RDNH…HYKR).

The protein localises to the membrane. This is an uncharacterized protein from Plasmodium falciparum (isolate 3D7).